Reading from the N-terminus, the 1770-residue chain is NEDD4-binding protein 2 (1770 aa).

Residues 1 to 40 form a disordered region; that stretch reads MPRRRKNLGGNPFRKTANPKEVVVSSVASREEPTTTLPSM. The 44-residue stretch at 46 to 89 folds into the CUE domain; that stretch reads DQEELFTSISEIFSDLDPDVVYLMLSECDFKVENAMDCLLELSA. Coiled-coil stretches lie at residues 90 to 177 and 218 to 259; these read TDTK…NDSS and HSVL…IAGC. The disordered stretch occupies residues 95–129; sequence EESSSQSFVASENQVGAAESKIMEKRPEEESEDSK. Positions 97-108 are enriched in polar residues; the sequence is SSSQSFVASENQ. Residues 115–129 are compositionally biased toward basic and acidic residues; that stretch reads KIMEKRPEEESEDSK. Position 447–454 (447–454) interacts with ATP; it reads GLPGSGKS. 4 disordered regions span residues 712 to 756, 795 to 822, 836 to 862, and 890 to 913; these read SKTD…GEIV, KTIG…YNYP, DCVQ…ASEP, and SLAQ…LEIG. A compositionally biased stretch (basic and acidic residues) spans 843–856; that stretch reads SPHESVEDGRKSQC. At S906 the chain carries Phosphoserine. A Phosphothreonine modification is found at T1210. The disordered stretch occupies residues 1580–1606; it reads NENVTSHTGQKSKEKKPKKLKETEETP. The Smr domain maps to 1691–1770; it reads LDLHGLHVDE…KPGCLKVMLK (80 aa).

As to quaternary structure, binds NEDD4. Binds BCL3 and CREBBP. Ubiquitinated; this targets the protein for degradation by the proteasome.

The protein localises to the cytoplasm. In terms of biological role, has 5'-polynucleotide kinase and nicking endonuclease activity. May play a role in DNA repair or recombination. This chain is NEDD4-binding protein 2 (N4BP2), found in Homo sapiens (Human).